The primary structure comprises 373 residues: Putative F-box/kelch-repeat protein At3g19410 (373 aa).

The region spanning 1–46 (MTIPELPKDLIEEILCYVPATYLKRLRSTCKGWNRLFKDDRRFAKK) is the F-box domain. 3 Kelch repeats span residues 101–148 (RIFH…FVLG), 149–200 (YYQE…QCVS), and 329–373 (KLYI…EEKS).

This chain is Putative F-box/kelch-repeat protein At3g19410, found in Arabidopsis thaliana (Mouse-ear cress).